We begin with the raw amino-acid sequence, 86 residues long: Dolichyl-diphosphooligosaccharide--protein glycosyltransferase subunit OST5 (86 aa).

Residues T2–K27 are Lumenal-facing. The helical transmembrane segment at F28–G48 threads the bilayer. Topologically, residues S49–K56 are cytoplasmic. Residues L57–F77 traverse the membrane as a helical segment. Topologically, residues A78–V86 are lumenal.

This sequence belongs to the OST5 family. Component of the oligosaccharyltransferase (OST) complex, which appears to exist in two assemblies comprising OST1, OST2, OST4, OST5, STT3, SWP1, WPB1, and either OST3 or OST6. OST assembly occurs through the formation of 3 subcomplexes. Subcomplex 1 contains OST1 and OST5, subcomplex 2 contains STT3, OST3, and OST4, and subcomplex 3 contains OST2, WBP1, and SWP1.

It is found in the endoplasmic reticulum membrane. The protein operates within protein modification; protein glycosylation. Subunit of the oligosaccharyl transferase (OST) complex that catalyzes the initial transfer of a defined glycan (Glc(3)Man(9)GlcNAc(2) in eukaryotes) from the lipid carrier dolichol-pyrophosphate to an asparagine residue within an Asn-X-Ser/Thr consensus motif in nascent polypeptide chains, the first step in protein N-glycosylation. N-glycosylation occurs cotranslationally and the complex associates with the Sec61 complex at the channel-forming translocon complex that mediates protein translocation across the endoplasmic reticulum (ER). All subunits are required for a maximal enzyme activity. In Saccharomyces cerevisiae (strain ATCC 204508 / S288c) (Baker's yeast), this protein is Dolichyl-diphosphooligosaccharide--protein glycosyltransferase subunit OST5 (OST5).